Reading from the N-terminus, the 1499-residue chain is Multidrug resistance protein CDR2 (1499 aa).

Over 1–511 (MSTANTSLSQ…NFLRMKGDPS (511 aa)) the chain is Cytoplasmic. The 255-residue stretch at 148–402 (FTTEAINKLK…FENMGWKCPQ (255 aa)) folds into the ABC transporter 1 domain. 6 helical membrane-spanning segments follow: residues 512-532 (IPLI…SVFF), 546-566 (GALF…ILSL), 596-616 (LPVK…MVNL), 621-641 (GNFF…SHMF), 660-680 (VFLL…YILG), and 763-783 (FGIT…LTEF). Residues 784-1193 (NKGAMQKGEI…TIVQDWRSPG (410 aa)) lie on the Cytoplasmic side of the membrane. One can recognise an ABC transporter 2 domain in the interval 857–1101 (FFWRDLTYQV…MINYFEKYGA (245 aa)). 893–900 (GASGAGKT) contacts ATP. Transmembrane regions (helical) follow at residues 1194 to 1214 (YIYS…FSFF), 1229 to 1249 (AVFM…PYFV), 1279 to 1299 (IPFQ…PVGL), 1315 to 1335 (LMWM…QLAI), 1354 to 1374 (LCLM…FWIF), and 1465 to 1485 (FGIF…FYWL).

Belongs to the ABC transporter superfamily. ABCG family. PDR (TC 3.A.1.205) subfamily.

It is found in the membrane. Its function is as follows. Multidrug efflux transporter. Confers resistance to azole antifungal agents, to other antifungals (terbinafine, amorolfine) and to a variety of metabolic inhibitors. The protein is Multidrug resistance protein CDR2 (CDR2) of Candida albicans (strain SC5314 / ATCC MYA-2876) (Yeast).